A 600-amino-acid chain; its full sequence is Elongation factor 4 (600 aa).

The tr-type G domain occupies 4–186; it reads SKIRNFSIIA…AIVNKIPAPY (183 aa). Residues 16 to 21 and 133 to 136 contribute to the GTP site; these read DHGKST and NKVD.

The protein belongs to the TRAFAC class translation factor GTPase superfamily. Classic translation factor GTPase family. LepA subfamily.

The protein resides in the cell membrane. The catalysed reaction is GTP + H2O = GDP + phosphate + H(+). Its function is as follows. Required for accurate and efficient protein synthesis under certain stress conditions. May act as a fidelity factor of the translation reaction, by catalyzing a one-codon backward translocation of tRNAs on improperly translocated ribosomes. Back-translocation proceeds from a post-translocation (POST) complex to a pre-translocation (PRE) complex, thus giving elongation factor G a second chance to translocate the tRNAs correctly. Binds to ribosomes in a GTP-dependent manner. In Mesoplasma florum (strain ATCC 33453 / NBRC 100688 / NCTC 11704 / L1) (Acholeplasma florum), this protein is Elongation factor 4.